A 250-amino-acid chain; its full sequence is Purine nucleoside phosphorylase BQ2027_MB2173C (250 aa).

The Zn(2+) site is built by His-77, Cys-114, and His-131.

It belongs to the purine nucleoside phosphorylase YfiH/LACC1 family. In terms of assembly, homodimer. The cofactor is Cu(2+). Zn(2+) serves as cofactor.

The catalysed reaction is adenosine + phosphate = alpha-D-ribose 1-phosphate + adenine. The enzyme catalyses S-methyl-5'-thioadenosine + phosphate = 5-(methylsulfanyl)-alpha-D-ribose 1-phosphate + adenine. It carries out the reaction inosine + phosphate = alpha-D-ribose 1-phosphate + hypoxanthine. It catalyses the reaction adenosine + H2O + H(+) = inosine + NH4(+). Functionally, purine nucleoside enzyme that catalyzes the phosphorolysis of adenosine and inosine nucleosides, yielding D-ribose 1-phosphate and the respective free bases, adenine and hypoxanthine. Also catalyzes the phosphorolysis of S-methyl-5'-thioadenosine into adenine and S-methyl-5-thio-alpha-D-ribose 1-phosphate. Also has adenosine deaminase activity. This chain is Purine nucleoside phosphorylase BQ2027_MB2173C, found in Mycobacterium bovis (strain ATCC BAA-935 / AF2122/97).